Here is a 471-residue protein sequence, read N- to C-terminus: Splicing factor 3A subunit 2 (471 aa).

Methionine 1 carries the post-translational modification N-acetylmethionine. The tract at residues 1 to 27 is disordered; it reads MDFQHRPGGKTGSGGVASSSESNRDRR. Lysine 10 is modified (N6-acetyllysine). The segment at 54–84 adopts a Matrin-type zinc-finger fold; that stretch reads YECKLCLTLHNNEGSYLAHTQGKKHQTNLAR. Residue serine 153 is modified to Phosphoserine. Pro residues-rich tracts occupy residues 217-295, 303-316, 324-383, and 437-471; these read PPAP…PVVH, PPAP…PPPS, and HPQP…PPGN. The segment at 217 to 471 is disordered; it reads PPAPPSLPAG…GNMPPPPPGN (255 aa).

This sequence belongs to the SF3A2 family. As to quaternary structure, component of the 17S U2 SnRNP complex, a ribonucleoprotein complex that contains small nuclear RNA (snRNA) U2 and a number of specific proteins. Part of the SF3A subcomplex of the 17S U2 SnRNP complex which is composed of three subunits; SF3A3/SAP61, SF3A2/SAP62 and SF3A1/SAP114. SF3A associates with the splicing factor SF3B and a 12S RNA unit to form the mature 17S U2 small nuclear ribonucleoprotein complex (17S U2 snRNP). Identified in the spliceosome 'E' complex, a precursor of the spliceosome 'A' complex. Identified in the spliceosome 'A' and 'B' complexes. Identified in the spliceosome 'C' complex. Interacts with HTATSF1.

The protein localises to the nucleus. Component of the 17S U2 SnRNP complex of the spliceosome, a large ribonucleoprotein complex that removes introns from transcribed pre-mRNAs. The 17S U2 SnRNP complex (1) directly participates in early spliceosome assembly and (2) mediates recognition of the intron branch site during pre-mRNA splicing by promoting the selection of the pre-mRNA branch-site adenosine, the nucleophile for the first step of splicing. Within the 17S U2 SnRNP complex, SF3A2 is part of the SF3A subcomplex that contributes to the assembly of the 17S U2 snRNP, and the subsequent assembly of the pre-spliceosome 'E' complex and the pre-catalytic spliceosome 'A' complex. Involved in pre-mRNA splicing as a component of pre-catalytic spliceosome 'B' complexes, including the Bact complex. Interacts directly with the duplex formed by U2 snRNA and the intron. The protein is Splicing factor 3A subunit 2 (Sf3a2) of Rattus norvegicus (Rat).